The chain runs to 339 residues: Anthranilate phosphoribosyltransferase (339 aa).

5-phospho-alpha-D-ribose 1-diphosphate is bound by residues Gly-81, 84 to 85 (GD), Ser-89, 91 to 94 (NVSS), 109 to 117 (KHGNRALSS), and Ala-121. Gly-81 is a binding site for anthranilate. Ser-93 lines the Mg(2+) pocket. Position 112 (Asn-112) interacts with anthranilate. Arg-167 is a binding site for anthranilate. Mg(2+) is bound by residues Asp-225 and Glu-226.

This sequence belongs to the anthranilate phosphoribosyltransferase family. Homodimer. Mg(2+) is required as a cofactor.

It carries out the reaction N-(5-phospho-beta-D-ribosyl)anthranilate + diphosphate = 5-phospho-alpha-D-ribose 1-diphosphate + anthranilate. It participates in amino-acid biosynthesis; L-tryptophan biosynthesis; L-tryptophan from chorismate: step 2/5. In terms of biological role, catalyzes the transfer of the phosphoribosyl group of 5-phosphorylribose-1-pyrophosphate (PRPP) to anthranilate to yield N-(5'-phosphoribosyl)-anthranilate (PRA). The chain is Anthranilate phosphoribosyltransferase from Brucella abortus (strain S19).